Consider the following 216-residue polypeptide: Cytidylate kinase (216 aa).

7–15 lines the ATP pocket; that stretch reads GPSGTGKST.

This sequence belongs to the cytidylate kinase family. Type 1 subfamily.

The protein resides in the cytoplasm. It carries out the reaction CMP + ATP = CDP + ADP. It catalyses the reaction dCMP + ATP = dCDP + ADP. This chain is Cytidylate kinase, found in Chlamydia trachomatis serovar L2 (strain ATCC VR-902B / DSM 19102 / 434/Bu).